Consider the following 470-residue polypeptide: Light-independent protochlorophyllide reductase subunit N (470 aa).

[4Fe-4S] cluster-binding residues include C22, C47, and C107.

This sequence belongs to the BchN/ChlN family. Protochlorophyllide reductase is composed of three subunits; ChlL, ChlN and ChlB. Forms a heterotetramer of two ChlB and two ChlN subunits. [4Fe-4S] cluster is required as a cofactor.

It is found in the plastid. The protein resides in the chloroplast. The enzyme catalyses chlorophyllide a + oxidized 2[4Fe-4S]-[ferredoxin] + 2 ADP + 2 phosphate = protochlorophyllide a + reduced 2[4Fe-4S]-[ferredoxin] + 2 ATP + 2 H2O. It participates in porphyrin-containing compound metabolism; chlorophyll biosynthesis (light-independent). Functionally, component of the dark-operative protochlorophyllide reductase (DPOR) that uses Mg-ATP and reduced ferredoxin to reduce ring D of protochlorophyllide (Pchlide) to form chlorophyllide a (Chlide). This reaction is light-independent. The NB-protein (ChlN-ChlB) is the catalytic component of the complex. This Pinus koraiensis (Korean pine) protein is Light-independent protochlorophyllide reductase subunit N.